Reading from the N-terminus, the 306-residue chain is tRNA pseudouridine synthase B (306 aa).

D48 acts as the Nucleophile in catalysis.

Belongs to the pseudouridine synthase TruB family. Type 1 subfamily.

It catalyses the reaction uridine(55) in tRNA = pseudouridine(55) in tRNA. Functionally, responsible for synthesis of pseudouridine from uracil-55 in the psi GC loop of transfer RNAs. The sequence is that of tRNA pseudouridine synthase B from Haemophilus influenzae (strain PittEE).